Reading from the N-terminus, the 246-residue chain is 7-cyano-7-deazaguanine synthase (246 aa).

ATP is bound at residue 24–34 (FSGGLDSTTVL). Residues C209, C219, C222, and C225 each contribute to the Zn(2+) site.

This sequence belongs to the QueC family. Zn(2+) is required as a cofactor.

The catalysed reaction is 7-carboxy-7-deazaguanine + NH4(+) + ATP = 7-cyano-7-deazaguanine + ADP + phosphate + H2O + H(+). Its pathway is purine metabolism; 7-cyano-7-deazaguanine biosynthesis. In terms of biological role, catalyzes the ATP-dependent conversion of 7-carboxy-7-deazaguanine (CDG) to 7-cyano-7-deazaguanine (preQ(0)). The polypeptide is 7-cyano-7-deazaguanine synthase (Polynucleobacter asymbioticus (strain DSM 18221 / CIP 109841 / QLW-P1DMWA-1) (Polynucleobacter necessarius subsp. asymbioticus)).